A 496-amino-acid polypeptide reads, in one-letter code: Putative (R)-citramalate synthase CimA (496 aa).

Residues 3–253 form the Pyruvate carboxyltransferase domain; sequence VRVLDTTLRD…DTSINIEMLY (251 aa).

It belongs to the alpha-IPM synthase/homocitrate synthase family. As to quaternary structure, homodimer.

The enzyme catalyses pyruvate + acetyl-CoA + H2O = (3R)-citramalate + CoA + H(+). It participates in amino-acid biosynthesis; L-isoleucine biosynthesis; 2-oxobutanoate from pyruvate: step 1/3. Catalyzes the condensation of pyruvate and acetyl-coenzyme A to form (R)-citramalate. The sequence is that of Putative (R)-citramalate synthase CimA from Methanothermobacter thermautotrophicus (strain ATCC 29096 / DSM 1053 / JCM 10044 / NBRC 100330 / Delta H) (Methanobacterium thermoautotrophicum).